Here is a 717-residue protein sequence, read N- to C-terminus: Acetone carboxylase beta subunit (717 aa).

In terms of assembly, heterohexamer of two alpha, two beta and two gamma subunits. Fe cation is required as a cofactor. Requires Mg(2+) as cofactor. The cofactor is Zn(2+). Post-translationally, the N-terminus is blocked.

It catalyses the reaction acetone + hydrogencarbonate + 2 ATP + 3 H2O = acetoacetate + 2 AMP + 4 phosphate + 4 H(+). In terms of biological role, catalyzes the carboxylation of acetone to form acetoacetate. Has a reduced activity on butanone, and no activity on 2-pentatone, 3-pentatone, 2-hexanone, chloroacetone, pyruvate, phosphoenolpyruvate, acetaldehyde, propionaldehyde and propylene oxide. This is Acetone carboxylase beta subunit from Xanthobacter autotrophicus (strain ATCC BAA-1158 / Py2).